A 429-amino-acid polypeptide reads, in one-letter code: Glutamate-1-semialdehyde 2,1-aminomutase 2 (429 aa).

Residue Lys268 is modified to N6-(pyridoxal phosphate)lysine.

Belongs to the class-III pyridoxal-phosphate-dependent aminotransferase family. HemL subfamily. As to quaternary structure, homodimer. It depends on pyridoxal 5'-phosphate as a cofactor.

Its subcellular location is the cytoplasm. It carries out the reaction (S)-4-amino-5-oxopentanoate = 5-aminolevulinate. It functions in the pathway porphyrin-containing compound metabolism; protoporphyrin-IX biosynthesis; 5-aminolevulinate from L-glutamyl-tRNA(Glu): step 2/2. In Staphylococcus aureus (strain MSSA476), this protein is Glutamate-1-semialdehyde 2,1-aminomutase 2.